The primary structure comprises 492 residues: N-succinylglutamate 5-semialdehyde dehydrogenase (492 aa).

220 to 225 (GSANTG) provides a ligand contact to NAD(+). Catalysis depends on residues Glu243 and Cys277.

The protein belongs to the aldehyde dehydrogenase family. AstD subfamily.

The enzyme catalyses N-succinyl-L-glutamate 5-semialdehyde + NAD(+) + H2O = N-succinyl-L-glutamate + NADH + 2 H(+). It participates in amino-acid degradation; L-arginine degradation via AST pathway; L-glutamate and succinate from L-arginine: step 4/5. Its function is as follows. Catalyzes the NAD-dependent reduction of succinylglutamate semialdehyde into succinylglutamate. The sequence is that of N-succinylglutamate 5-semialdehyde dehydrogenase from Shigella flexneri.